Here is a 266-residue protein sequence, read N- to C-terminus: Indole-3-glycerol phosphate synthase (266 aa).

It belongs to the TrpC family.

It catalyses the reaction 1-(2-carboxyphenylamino)-1-deoxy-D-ribulose 5-phosphate + H(+) = (1S,2R)-1-C-(indol-3-yl)glycerol 3-phosphate + CO2 + H2O. It participates in amino-acid biosynthesis; L-tryptophan biosynthesis; L-tryptophan from chorismate: step 4/5. The chain is Indole-3-glycerol phosphate synthase from Acidovorax sp. (strain JS42).